The sequence spans 175 residues: Large ribosomal subunit protein uL10 (175 aa).

It belongs to the universal ribosomal protein uL10 family. Part of the ribosomal stalk of the 50S ribosomal subunit. The N-terminus interacts with L11 and the large rRNA to form the base of the stalk. The C-terminus forms an elongated spine to which L12 dimers bind in a sequential fashion forming a multimeric L10(L12)X complex.

Forms part of the ribosomal stalk, playing a central role in the interaction of the ribosome with GTP-bound translation factors. The protein is Large ribosomal subunit protein uL10 (rplJ) of Xylella fastidiosa (strain 9a5c).